The chain runs to 170 residues: MERRLVVTLQCLVLLYLAPECGGTDQCDNFPQMLRDLRDAFSRVKTFFQTKDEVDNLLLKESLLEDFKGYLGCQALSEMIQFYLEEVMPQAENQDPEAKDHVNSLGENLKTLRLRLRRCHRFLPCENKSKAVEQIKNAFNKLQEKGIYKAMSEFDIFINYIEAYMTIKAR.

The first 23 residues, 1–23 (MERRLVVTLQCLVLLYLAPECGG), serve as a signal peptide directing secretion. Intrachain disulfides connect Cys27/Cys119 and Cys73/Cys125. A coiled-coil region spans residues 97–145 (EAKDHVNSLGENLKTLRLRLRRCHRFLPCENKSKAVEQIKNAFNKLQEK). A glycan (N-linked (GlcNAc...) asparagine; by host) is linked at Asn127.

The protein belongs to the IL-10 family. In terms of assembly, homodimer.

Its subcellular location is the secreted. Functionally, inhibits IFN-gamma synthesis. Down-regulates the expression of the host TAP1 gene (transporter associated with antigen processing), thereby affecting the transport of peptides into the endoplasmic reticulum and subsequent peptide loading by MHC class I molecules. In consequence, infected cells are masked for immune recognition by cytotoxic T-lymphocytes. This Epstein-Barr virus (strain AG876) (HHV-4) protein is Viral interleukin-10 homolog.